The following is a 461-amino-acid chain: Argininosuccinate lyase (461 aa).

This sequence belongs to the lyase 1 family. Argininosuccinate lyase subfamily.

The protein localises to the cytoplasm. It catalyses the reaction 2-(N(omega)-L-arginino)succinate = fumarate + L-arginine. It participates in amino-acid biosynthesis; L-arginine biosynthesis; L-arginine from L-ornithine and carbamoyl phosphate: step 3/3. The protein is Argininosuccinate lyase of Chlorobium luteolum (strain DSM 273 / BCRC 81028 / 2530) (Pelodictyon luteolum).